A 369-amino-acid polypeptide reads, in one-letter code: Nuclear hormone receptor family member nhr-64 (369 aa).

Positions 67–142 (EKCQVDKAKR…ASTRGLRTTV (76 aa)) form a DNA-binding region, nuclear receptor. NR C4-type zinc fingers lie at residues 70–90 (QVDK…CLRK) and 106–130 (PANP…TLIR). The NR LBD domain occupies 120-352 (PDDPLLDTLI…NLMLELMLPN (233 aa)).

It belongs to the nuclear hormone receptor family.

The protein resides in the nucleus. Orphan nuclear receptor. In Caenorhabditis elegans, this protein is Nuclear hormone receptor family member nhr-64 (nhr-64).